The chain runs to 270 residues: 5'-AMP-activated protein kinase subunit beta-1 (270 aa).

The disordered stretch occupies residues 1–43; that stretch reads MGNTSSERAALERHGGHKTPRRDSSGGTKDGDRPKILMDSPED. Gly-2 carries N-myristoyl glycine lipidation. Thr-4 is modified (phosphothreonine). Residues Ser-5 and Ser-6 each carry the phosphoserine modification. Thr-19 is modified (phosphothreonine). Residues 21–36 are compositionally biased toward basic and acidic residues; the sequence is RRDSSGGTKDGDRPKI. 2 positions are modified to phosphoserine; by autocatalysis: Ser-24 and Ser-25. Phosphoserine occurs at positions 40, 96, 101, and 108. The segment at 68-163 is glycogen-binding domain; the sequence is EVNDKAPAQA…QVKKTDFEVF (96 aa). Phosphothreonine is present on Thr-148. Ser-182 is modified (phosphoserine).

The protein belongs to the 5'-AMP-activated protein kinase beta subunit family. AMPK is a heterotrimer of an alpha catalytic subunit (PRKAA1 or PRKAA2), a beta (PRKAB1 or PRKAB2) and a gamma non-catalytic subunits (PRKAG1, PRKAG2 or PRKAG3). Interacts with FNIP1 and FNIP2. Post-translationally, phosphorylated when associated with the catalytic subunit (PRKAA1 or PRKAA2). Phosphorylated by ULK1; leading to negatively regulate AMPK activity and suggesting the existence of a regulatory feedback loop between ULK1 and AMPK.

In terms of biological role, non-catalytic subunit of AMP-activated protein kinase (AMPK), an energy sensor protein kinase that plays a key role in regulating cellular energy metabolism. In response to reduction of intracellular ATP levels, AMPK activates energy-producing pathways and inhibits energy-consuming processes: inhibits protein, carbohydrate and lipid biosynthesis, as well as cell growth and proliferation. AMPK acts via direct phosphorylation of metabolic enzymes, and by longer-term effects via phosphorylation of transcription regulators. Also acts as a regulator of cellular polarity by remodeling the actin cytoskeleton; probably by indirectly activating myosin. Beta non-catalytic subunit acts as a scaffold on which the AMPK complex assembles, via its C-terminus that bridges alpha (PRKAA1 or PRKAA2) and gamma subunits (PRKAG1, PRKAG2 or PRKAG3). The chain is 5'-AMP-activated protein kinase subunit beta-1 (PRKAB1) from Homo sapiens (Human).